Reading from the N-terminus, the 51-residue chain is Large ribosomal subunit protein bL33 (51 aa).

It belongs to the bacterial ribosomal protein bL33 family.

In Pseudoalteromonas translucida (strain TAC 125), this protein is Large ribosomal subunit protein bL33.